The chain runs to 63 residues: SERF-like protein C1705.02 (63 aa).

The span at 1–13 (MSRGNQRDVDRAR) shows a compositional bias: basic and acidic residues. The interval 1–63 (MSRGNQRDVD…EANGGSKGKK (63 aa)) is disordered. Residues 14–24 (NLKKSQASKKK) show a composition bias toward basic residues. Residues 25–35 (QAGDPTKRLEA) show a composition bias toward basic and acidic residues.

This sequence belongs to the SERF family.

It localises to the cytoplasm. The protein resides in the nucleus. It is found in the nucleolus. This chain is SERF-like protein C1705.02, found in Schizosaccharomyces pombe (strain 972 / ATCC 24843) (Fission yeast).